The primary structure comprises 61 residues: Small ribosomal subunit protein uS14 (61 aa).

The Zn(2+) site is built by cysteine 24, cysteine 27, cysteine 40, and cysteine 43.

The protein belongs to the universal ribosomal protein uS14 family. Zinc-binding uS14 subfamily. As to quaternary structure, part of the 30S ribosomal subunit. Contacts proteins S3 and S10. It depends on Zn(2+) as a cofactor.

Binds 16S rRNA, required for the assembly of 30S particles and may also be responsible for determining the conformation of the 16S rRNA at the A site. The sequence is that of Small ribosomal subunit protein uS14 from Geobacillus thermodenitrificans (strain NG80-2).